Reading from the N-terminus, the 58-residue chain is Light-harvesting protein B-875 alpha chain (58 aa).

Over 1–15 (MSKFYKIWMIFDPRR) the chain is Cytoplasmic. The helical transmembrane segment at 16 to 36 (VFVAQGVFLFLLAVMIHLILL) threads the bilayer. H32 serves as a coordination point for a bacteriochlorophyll. The Periplasmic portion of the chain corresponds to 37–58 (STPSYNWLEISAAKYNRVAVAE).

The protein belongs to the antenna complex alpha subunit family. The core complex is formed by different alpha and beta chains, binding bacteriochlorophyll molecules, and arranged most probably in tetrameric structures disposed around the reaction center. The non-pigmented gamma chains may constitute additional components.

It localises to the cell inner membrane. In terms of biological role, antenna complexes are light-harvesting systems, which transfer the excitation energy to the reaction centers. The chain is Light-harvesting protein B-875 alpha chain (pufA) from Cereibacter sphaeroides (strain ATCC 17023 / DSM 158 / JCM 6121 / CCUG 31486 / LMG 2827 / NBRC 12203 / NCIMB 8253 / ATH 2.4.1.) (Rhodobacter sphaeroides).